The primary structure comprises 178 residues: Bifunctional protein PyrR (178 aa).

Positions 99–111 (VVLVDDVIFKGRT) match the PRPP-binding motif.

Belongs to the purine/pyrimidine phosphoribosyltransferase family. PyrR subfamily.

It catalyses the reaction UMP + diphosphate = 5-phospho-alpha-D-ribose 1-diphosphate + uracil. Regulates the transcription of the pyrimidine nucleotide (pyr) operon in response to exogenous pyrimidines. Its function is as follows. Also displays a weak uracil phosphoribosyltransferase activity which is not physiologically significant. The sequence is that of Bifunctional protein PyrR from Nostoc punctiforme (strain ATCC 29133 / PCC 73102).